A 90-amino-acid polypeptide reads, in one-letter code: MKTAIFTVVLALAVFAVLSFGWEANEKALSEGFTELIHEKEAASETEARECRYFWGECHDHMPCCDWLVCRYKWPITYNICVWNRTFPEK.

The first 19 residues, 1–19 (MKTAIFTVVLALAVFAVLS), serve as a signal peptide directing secretion. The propeptide occupies 20 to 50 (FGWEANEKALSEGFTELIHEKEAASETEARE). Intrachain disulfides connect cysteine 51/cysteine 65, cysteine 58/cysteine 70, and cysteine 64/cysteine 81.

This sequence belongs to the neurotoxin 10 (Hwtx-1) family. 13 (Hntx-13) subfamily. As to expression, expressed by the venom gland.

Its subcellular location is the secreted. Its function is as follows. Ion channel inhibitor. In Cyriopagopus hainanus (Chinese bird spider), this protein is U7-theraphotoxin-Hhn1a 7.